We begin with the raw amino-acid sequence, 470 residues long: Putative dipeptidase TSTA_079200 (470 aa).

The chain crosses the membrane as a helical span at residues 40-60 (AWLFGLGTLGIILASVLLNPF). Positions 92 and 94 each coordinate Zn(2+). Cysteine 143 and cysteine 237 are disulfide-bonded. N-linked (GlcNAc...) asparagine glycosylation occurs at asparagine 188. A Zn(2+)-binding site is contributed by glutamate 208. Histidine 235 serves as a coordination point for substrate. The Zn(2+) site is built by histidine 279 and histidine 300. Substrate-binding residues include arginine 311 and aspartate 371.

This sequence belongs to the metallo-dependent hydrolases superfamily. Peptidase M19 family. It depends on Zn(2+) as a cofactor.

The protein resides in the membrane. It catalyses the reaction an L-aminoacyl-L-amino acid + H2O = 2 an L-alpha-amino acid. Functionally, hydrolyzes a wide range of dipeptides. The chain is Putative dipeptidase TSTA_079200 from Talaromyces stipitatus (strain ATCC 10500 / CBS 375.48 / QM 6759 / NRRL 1006) (Penicillium stipitatum).